The following is a 140-amino-acid chain: Sex-regulated protein janus-B (140 aa).

R42 lines the substrate pocket. H69 (proton acceptor) is an active-site residue. 110–112 (SRT) is a binding site for substrate.

The protein belongs to the janus family.

Functionally, janA and janB regulate somatic sex differentiation. The polypeptide is Sex-regulated protein janus-B (janB) (Drosophila sechellia (Fruit fly)).